The sequence spans 275 residues: MYRDFGEPGPSSGAGSAYGRPAQPQQAQTQTVQQQKFHLVPSINAVSGSQELQWMVQPHFLGPSGYPRPLTYPQYSPPQPRPGVIRALGPPPGVRRRPCEQISPEEEERRRVRRERNKLAAAKCRNRRKELTDFLQAETDKLEDEKSGLQREIEELQKQKERLELVLEAHRPICKIPEEDKKDTGGTSSTSGAGSPPGPCRPVPCISLSPGPVLEPEALHTPTLMTTPSLTPFTPSLVFTYPSTPEPCSSAHRKSSSSSGDPSSDPLGSPTLLAL.

Disordered regions lie at residues 1-33 (MYRD…QTVQ) and 71-115 (TYPQ…VRRE). The span at 7 to 33 (EPGPSSGAGSAYGRPAQPQQAQTQTVQ) shows a compositional bias: low complexity. A bZIP domain is found at 107-170 (EERRRVRRER…ERLELVLEAH (64 aa)). The tract at residues 109–129 (RRRVRRERNKLAAAKCRNRRK) is basic motif. The leucine-zipper stretch occupies residues 135–163 (LQAETDKLEDEKSGLQREIEELQKQKERL). Over residues 171–184 (RPICKIPEEDKKDT) the composition is skewed to basic and acidic residues. Residues 171–275 (RPICKIPEED…PLGSPTLLAL (105 aa)) are disordered. Low complexity-rich tracts occupy residues 185-194 (GGTSSTSGAG), 219-237 (LHTP…TPSL), and 256-275 (SSSS…LLAL). Ser269 carries the phosphoserine modification.

It belongs to the bZIP family. Fos subfamily. Heterodimer. Interacts with the BAF multiprotein chromatin-remodeling complex subunits SMARCB1 and SMARCD1. Interacts with ARID1A and JUN.

It is found in the nucleus. This Rattus norvegicus (Rat) protein is Fos-related antigen 1 (Fosl1).